A 267-amino-acid chain; its full sequence is 3-methyl-2-oxobutanoate hydroxymethyltransferase (267 aa).

Asp-45 and Asp-84 together coordinate Mg(2+). 3-methyl-2-oxobutanoate-binding positions include 45–46 (DS), Asp-84, and Lys-113. Glu-115 is a binding site for Mg(2+). The active-site Proton acceptor is the Glu-182.

Belongs to the PanB family. In terms of assembly, homodecamer; pentamer of dimers. The cofactor is Mg(2+).

It localises to the cytoplasm. It carries out the reaction 3-methyl-2-oxobutanoate + (6R)-5,10-methylene-5,6,7,8-tetrahydrofolate + H2O = 2-dehydropantoate + (6S)-5,6,7,8-tetrahydrofolate. It participates in cofactor biosynthesis; coenzyme A biosynthesis. Functionally, catalyzes the reversible reaction in which hydroxymethyl group from 5,10-methylenetetrahydrofolate is transferred onto alpha-ketoisovalerate to form ketopantoate. The polypeptide is 3-methyl-2-oxobutanoate hydroxymethyltransferase (Saccharolobus islandicus (strain M.16.27) (Sulfolobus islandicus)).